The primary structure comprises 622 residues: Mitochondrial distribution and morphology protein 34 (622 aa).

Residues 1–204 (MSFKVNWNSL…LPTLIHQLSL (204 aa)) form the SMP-LTD domain. Disordered regions lie at residues 364 to 393 (YSNKDAPNKPKRRRIKVHKKSKAKQDDNTV), 442 to 468 (LETMSTGSSSSASSQVIAHPTPKRAYQ), and 572 to 592 (LDGGKNSANTNNSSGGKNFRP). Residues 372–385 (KPKRRRIKVHKKSK) are compositionally biased toward basic residues. The segment covering 446 to 455 (STGSSSSASS) has biased composition (low complexity). Polar residues predominate over residues 577-587 (NSANTNNSSGG).

This sequence belongs to the MDM34 family. Component of the ER-mitochondria encounter structure (ERMES) or MDM complex, composed of MMM1, MDM10, MDM12 and MDM34.

It localises to the mitochondrion outer membrane. Component of the ERMES/MDM complex, which serves as a molecular tether to connect the endoplasmic reticulum (ER) and mitochondria. Components of this complex are involved in the control of mitochondrial shape and protein biogenesis, and function in nonvesicular lipid trafficking between the ER and mitochondria. MDM34 is required for the interaction of the ER-resident membrane protein MMM1 and the outer mitochondrial membrane-resident beta-barrel protein MDM10. This is Mitochondrial distribution and morphology protein 34 from Candida albicans (strain WO-1) (Yeast).